Consider the following 277-residue polypeptide: Small ribosomal subunit protein uS3 (277 aa).

Positions 43–111 (IRKVMNKDLE…QVQLNIFEVK (69 aa)) constitute a KH type-2 domain. The segment at 216-277 (FEEQQAQQGN…EAAVEPETKE (62 aa)) is disordered. A compositionally biased stretch (basic and acidic residues) spans 264–277 (EVSKEAAVEPETKE).

This sequence belongs to the universal ribosomal protein uS3 family. Part of the 30S ribosomal subunit. Forms a tight complex with proteins S10 and S14.

Functionally, binds the lower part of the 30S subunit head. Binds mRNA in the 70S ribosome, positioning it for translation. The protein is Small ribosomal subunit protein uS3 of Bifidobacterium animalis subsp. lactis (strain AD011).